The chain runs to 311 residues: Pyrimidine-specific ribonucleoside hydrolase RihA (311 aa).

H240 is a catalytic residue.

Belongs to the IUNH family. RihA subfamily.

Its function is as follows. Hydrolyzes with equal efficiency cytidine or uridine to ribose and cytosine or uracil, respectively. The polypeptide is Pyrimidine-specific ribonucleoside hydrolase RihA (Escherichia coli (strain SMS-3-5 / SECEC)).